We begin with the raw amino-acid sequence, 160 residues long: Transcription elongation factor GreA (160 aa).

The stretch at 43–75 (LSENAEYEAAREQQAQMESKIVDLENKLTRASI) forms a coiled coil.

Belongs to the GreA/GreB family.

Necessary for efficient RNA polymerase transcription elongation past template-encoded arresting sites. The arresting sites in DNA have the property of trapping a certain fraction of elongating RNA polymerases that pass through, resulting in locked ternary complexes. Cleavage of the nascent transcript by cleavage factors such as GreA or GreB allows the resumption of elongation from the new 3'terminus. GreA releases sequences of 2 to 3 nucleotides. The protein is Transcription elongation factor GreA of Prosthecochloris aestuarii (strain DSM 271 / SK 413).